The following is a 298-amino-acid chain: Inosose dehydratase (298 aa).

The protein belongs to the IolE/MocC family. Glutathione is required as a cofactor. Requires Co(2+) as cofactor. Mn(2+) serves as cofactor.

It catalyses the reaction scyllo-inosose = 3D-3,5/4-trihydroxycyclohexane-1,2-dione + H2O. It functions in the pathway polyol metabolism; myo-inositol degradation into acetyl-CoA; acetyl-CoA from myo-inositol: step 2/7. In terms of biological role, catalyzes the dehydration of inosose (2-keto-myo-inositol, 2KMI or 2,4,6/3,5-pentahydroxycyclohexanone) to 3D-(3,5/4)-trihydroxycyclohexane-1,2-dione (D-2,3-diketo-4-deoxy-epi-inositol). The chain is Inosose dehydratase from Clostridium tetani (strain Massachusetts / E88).